Reading from the N-terminus, the 260-residue chain is tRNA pseudouridine synthase A (260 aa).

The active-site Nucleophile is aspartate 52. Residue tyrosine 111 coordinates substrate.

The protein belongs to the tRNA pseudouridine synthase TruA family. Homodimer.

It catalyses the reaction uridine(38/39/40) in tRNA = pseudouridine(38/39/40) in tRNA. Functionally, formation of pseudouridine at positions 38, 39 and 40 in the anticodon stem and loop of transfer RNAs. This is tRNA pseudouridine synthase A from Beijerinckia indica subsp. indica (strain ATCC 9039 / DSM 1715 / NCIMB 8712).